The sequence spans 685 residues: Small ribosomal subunit protein mS39 (685 aa).

Residues 1 to 10 (MAAAAVAARR) constitute a mitochondrion transit peptide. Residue Lys127 is modified to N6-acetyllysine. PPR repeat units lie at residues 150 to 184 (IEDV…GTTV), 185 to 220 (SLET…ENLE), 254 to 288 (NARS…RLSA), 289 to 329 (DVYT…KVKP), 330 to 366 (NLQT…GIEP), 367 to 407 (SLAT…TFSP), 412 to 446 (DGRF…DNRK), 454 to 488 (RKVY…VFLP), 489 to 523 (HYQI…SHTF), and 572 to 606 (PANP…KKIP). A disordered region spans residues 663–685 (LGNLTELNSSDGESSSDSDSDDK). A compositionally biased stretch (acidic residues) spans 676–685 (SSSDSDSDDK).

It belongs to the mitochondrion-specific ribosomal protein mS39 family. In terms of assembly, component of the mitochondrial ribosome small subunit (28S) which comprises a 12S rRNA and about 30 distinct proteins. Associated with the 12S mitochondrial rRNA (12S mt-rRNA).

The protein localises to the mitochondrion. Its function is as follows. Mitochondrial RNA-binding protein that has a role in mitochondrial translation. This chain is Small ribosomal subunit protein mS39 (Ptcd3), found in Mus musculus (Mouse).